A 227-amino-acid polypeptide reads, in one-letter code: 7-cyano-7-deazaguanine synthase (227 aa).

An ATP-binding site is contributed by Leu-7–Leu-17. Zn(2+) contacts are provided by Cys-191, Cys-199, Cys-202, and Cys-205.

Belongs to the QueC family. The cofactor is Zn(2+).

It carries out the reaction 7-carboxy-7-deazaguanine + NH4(+) + ATP = 7-cyano-7-deazaguanine + ADP + phosphate + H2O + H(+). The protein operates within purine metabolism; 7-cyano-7-deazaguanine biosynthesis. In terms of biological role, catalyzes the ATP-dependent conversion of 7-carboxy-7-deazaguanine (CDG) to 7-cyano-7-deazaguanine (preQ(0)). In Trichormus variabilis (strain ATCC 29413 / PCC 7937) (Anabaena variabilis), this protein is 7-cyano-7-deazaguanine synthase.